Reading from the N-terminus, the 322-residue chain is CRISPR-associated protein Cas1 1 (322 aa).

E149, H214, and E229 together coordinate Mn(2+).

This sequence belongs to the CRISPR-associated endonuclease Cas1 family. In terms of assembly, homodimer, forms a heterotetramer with a Cas2 homodimer. It depends on Mg(2+) as a cofactor. Mn(2+) serves as cofactor.

CRISPR (clustered regularly interspaced short palindromic repeat), is an adaptive immune system that provides protection against mobile genetic elements (viruses, transposable elements and conjugative plasmids). CRISPR clusters contain spacers, sequences complementary to antecedent mobile elements, and target invading nucleic acids. CRISPR clusters are transcribed and processed into CRISPR RNA (crRNA). Acts as a dsDNA endonuclease. Involved in the integration of spacer DNA into the CRISPR cassette. In Methanobrevibacter ruminantium (strain ATCC 35063 / DSM 1093 / JCM 13430 / OCM 146 / M1) (Methanobacterium ruminantium), this protein is CRISPR-associated protein Cas1 1.